A 522-amino-acid polypeptide reads, in one-letter code: Amphoterin-induced protein 2 (522 aa).

The signal sequence occupies residues 1-39; that stretch reads MSLRVHTLPTLLGAVVRPGCRELLCLLMITVAVGPGASG. One can recognise an LRRNT domain in the interval 40–68; sequence VCPTACICATDIVSCTNKHLSKVPGNLFR. The Extracellular portion of the chain corresponds to 40–398; that stretch reads VCPTACICAT…RSHAHEAFNT (359 aa). Intrachain disulfides connect cysteine 41–cysteine 47 and cysteine 45–cysteine 54. LRR repeat units follow at residues 69–90, 94–115, 118–139, 142–163, 166–187, and 193–214; these read LMKRLDLSYNRIGLLDSEWIPV, KLNTLILRHNNITSISTGSFST, NLKCLDLSSNKLKTVKNAVFQE, VLEVLLLYNNHISYLDPSAFGG, QLQKLYLSGNFLTQFPMDLYVG, and ELMFLDVSYNRIPSMPMHHINL. Residue asparagine 104 is glycosylated (N-linked (GlcNAc...) asparagine). An LRRCT domain is found at 228–284; sequence NPFVCDCSLYSLLVFWYRRHFSSVMDFKNDYTCRLWSDSRHSRQVLLLQDSFMNCSD. 2 disulfide bridges follow: cysteine 232/cysteine 260 and cysteine 234/cysteine 282. N-linked (GlcNAc...) asparagine glycans are attached at residues asparagine 281, asparagine 288, asparagine 345, asparagine 373, asparagine 381, and asparagine 384. One can recognise an Ig-like C2-type domain in the interval 289-379; it reads GSFRALGFIH…RLLNETVDVT (91 aa). The cysteines at positions 310 and 363 are disulfide-linked. The chain crosses the membrane as a helical span at residues 399-419; sequence AFTTLAACVASIVLVLLYLYL. Topologically, residues 420–522 are cytoplasmic; it reads TPCPCKCKTK…FSDTPFVAST (103 aa). A disordered region spans residues 501 to 522; the sequence is RGKSDSDSVNSVFSDTPFVAST.

Belongs to the immunoglobulin superfamily. AMIGO family. In terms of assembly, binds itself as well as AMIGO1 and AMIGO3.

It is found in the cell membrane. The protein localises to the nucleus. Functionally, required for depolarization-dependent survival of cultured cerebellar granule neurons. May mediate homophilic as well as heterophilic cell-cell interaction with AMIGO1 or AMIGO3. May contribute to signal transduction through its intracellular domain. The polypeptide is Amphoterin-induced protein 2 (Pongo abelii (Sumatran orangutan)).